Consider the following 136-residue polypeptide: ATP synthase F(0) complex subunit C1, mitochondrial (136 aa).

Residues 1–61 constitute a mitochondrion transit peptide; the sequence is MQTTGALLIS…REFQTSVVSR (61 aa). A helical transmembrane segment spans residues 77 to 97; it reads VGVAGSGAGIGTVFGSLIIGY. K104 carries the N6,N6,N6-trimethyllysine modification. The helical transmembrane segment at 112–132 threads the bilayer; the sequence is ILGFALFEAMGLFCLMVAFLI.

This sequence belongs to the ATPase C chain family. As to quaternary structure, homooctamer; the c-ring consists of eight c subunits forming a circle, and each subunit adopts a hairpin shape. Component of the ATP synthase complex composed at least of ATP5F1A/subunit alpha, ATP5F1B/subunit beta, ATP5MC1/subunit c (homooctomer), MT-ATP6/subunit a, MT-ATP8/subunit 8, ATP5ME/subunit e, ATP5MF/subunit f, ATP5MG/subunit g, ATP5MK/subunit k, ATP5MJ/subunit j, ATP5F1C/subunit gamma, ATP5F1D/subunit delta, ATP5F1E/subunit epsilon, ATP5PF/subunit F6, ATP5PB/subunit b, ATP5PD/subunit d, ATP5PO/subunit OSCP. ATP synthase complex consists of a soluble F(1) head domain (subunits alpha(3) and beta(3)) - the catalytic core - and a membrane F(0) domain - the membrane proton channel (subunits c, a, 8, e, f, g, k and j). These two domains are linked by a central stalk (subunits gamma, delta, and epsilon) rotating inside the F1 region and a stationary peripheral stalk (subunits F6, b, d, and OSCP). Interacts with TMEM70 (homooligomer form); this interaction facilitates the oligomer formation of subunit c/ATP5MC1 (c-ring) and the c-ring membrane insertion and also protects ATP5MC1 against intramitochondrial proteolysis. Trimethylated by ATPSCKMT at Lys-104. Methylation is required for proper incorporation of the C subunit into the ATP synthase complex and mitochondrial respiration.

It localises to the mitochondrion membrane. The catalysed reaction is H(+)(in) = H(+)(out). Its function is as follows. Subunit c, of the mitochondrial membrane ATP synthase complex (F(1)F(0) ATP synthase or Complex V) that produces ATP from ADP in the presence of a proton gradient across the membrane which is generated by electron transport complexes of the respiratory chain. ATP synthase complex consist of a soluble F(1) head domain - the catalytic core - and a membrane F(1) domain - the membrane proton channel. These two domains are linked by a central stalk rotating inside the F(1) region and a stationary peripheral stalk. During catalysis, ATP synthesis in the catalytic domain of F(1) is coupled via a rotary mechanism of the central stalk subunits to proton translocation. With the subunit a (MT-ATP6), forms the proton-conducting channel in the F(0) domain, that contains two crucial half-channels (inlet and outlet) that facilitate proton movement from the mitochondrial intermembrane space (IMS) into the matrix. Protons are taken up via the inlet half-channel and released through the outlet half-channel, following a Grotthuss mechanism. In Sus scrofa (Pig), this protein is ATP synthase F(0) complex subunit C1, mitochondrial.